A 322-amino-acid polypeptide reads, in one-letter code: D-alanine--D-alanine ligase (322 aa).

One can recognise an ATP-grasp domain in the interval K108–E311. Residue I136 to T192 coordinates ATP. Positions 265, 278, and 280 each coordinate Mg(2+).

It belongs to the D-alanine--D-alanine ligase family. The cofactor is Mg(2+). It depends on Mn(2+) as a cofactor.

The protein resides in the cytoplasm. It catalyses the reaction 2 D-alanine + ATP = D-alanyl-D-alanine + ADP + phosphate + H(+). It functions in the pathway cell wall biogenesis; peptidoglycan biosynthesis. Cell wall formation. The chain is D-alanine--D-alanine ligase from Desulfotalea psychrophila (strain LSv54 / DSM 12343).